The sequence spans 159 residues: MSGLTHFDESGRAHMVDVSEKPVTARVAVARGAVKMSAETLALVTEGRAEKGDVLGVARLAGIMGAKRTADLIPLCHPLPITKVALELTADPALPGVVVEATVKTGGQTGVEMEALTAVSVACLTIYDMVKAVEKGMEITGIRLLLKEGGKSGRFEASA.

Substrate-binding positions include 75 to 77 (LCH) and 113 to 114 (ME). Residue Asp128 is part of the active site.

It belongs to the MoaC family. As to quaternary structure, homohexamer; trimer of dimers.

The catalysed reaction is (8S)-3',8-cyclo-7,8-dihydroguanosine 5'-triphosphate = cyclic pyranopterin phosphate + diphosphate. It functions in the pathway cofactor biosynthesis; molybdopterin biosynthesis. Functionally, catalyzes the conversion of (8S)-3',8-cyclo-7,8-dihydroguanosine 5'-triphosphate to cyclic pyranopterin monophosphate (cPMP). This is Cyclic pyranopterin monophosphate synthase from Cereibacter sphaeroides (strain ATCC 17023 / DSM 158 / JCM 6121 / CCUG 31486 / LMG 2827 / NBRC 12203 / NCIMB 8253 / ATH 2.4.1.) (Rhodobacter sphaeroides).